Reading from the N-terminus, the 92-residue chain is Large ribosomal subunit protein eL43 (92 aa).

Positions 39, 42, 57, and 60 each coordinate Zn(2+). The C4-type zinc-finger motif lies at 39-60 (CPNCGEDRVDRQGTGIWQCSYC).

Belongs to the eukaryotic ribosomal protein eL43 family. Putative zinc-binding subfamily. Part of the 50S ribosomal subunit. Contacts protein L2. The cofactor is Zn(2+).

In terms of biological role, binds to the 23S rRNA. This chain is Large ribosomal subunit protein eL43, found in Haloarcula marismortui (strain ATCC 43049 / DSM 3752 / JCM 8966 / VKM B-1809) (Halobacterium marismortui).